A 638-amino-acid chain; its full sequence is Threonine--tRNA ligase (638 aa).

Residues 1–61 enclose the TGS domain; the sequence is MPVITLPDGS…EHDARIEIVT (61 aa). Positions 243–534 are catalytic; it reads DHRKIAKAQD…LIEEYAGHFP (292 aa). Zn(2+)-binding residues include cysteine 334, histidine 385, and histidine 511.

It belongs to the class-II aminoacyl-tRNA synthetase family. Homodimer. The cofactor is Zn(2+).

It localises to the cytoplasm. The catalysed reaction is tRNA(Thr) + L-threonine + ATP = L-threonyl-tRNA(Thr) + AMP + diphosphate + H(+). In terms of biological role, catalyzes the attachment of threonine to tRNA(Thr) in a two-step reaction: L-threonine is first activated by ATP to form Thr-AMP and then transferred to the acceptor end of tRNA(Thr). Also edits incorrectly charged L-seryl-tRNA(Thr). This Idiomarina loihiensis (strain ATCC BAA-735 / DSM 15497 / L2-TR) protein is Threonine--tRNA ligase.